A 39-amino-acid chain; its full sequence is Photosystem II reaction center protein L (39 aa).

The helical transmembrane segment at 18–38 threads the bilayer; it reads SLYLGLLIVFTTGILFSSYFF.

Belongs to the PsbL family. In terms of assembly, PSII is composed of 1 copy each of membrane proteins PsbA, PsbB, PsbC, PsbD, PsbE, PsbF, PsbH, PsbI, PsbJ, PsbK, PsbL, PsbM, PsbT, PsbX, PsbY, PsbZ, Psb30/Ycf12, peripheral proteins PsbO, CyanoQ (PsbQ), PsbU, PsbV and a large number of cofactors. It forms dimeric complexes.

The protein localises to the cellular thylakoid membrane. Functionally, one of the components of the core complex of photosystem II (PSII). PSII is a light-driven water:plastoquinone oxidoreductase that uses light energy to abstract electrons from H(2)O, generating O(2) and a proton gradient subsequently used for ATP formation. It consists of a core antenna complex that captures photons, and an electron transfer chain that converts photonic excitation into a charge separation. This subunit is found at the monomer-monomer interface and is required for correct PSII assembly and/or dimerization. The protein is Photosystem II reaction center protein L of Synechococcus sp. (strain CC9311).